The chain runs to 429 residues: Serine--tRNA ligase (429 aa).

236 to 238 (TAE) contributes to the L-serine binding site. 267-269 (RSE) serves as a coordination point for ATP. Glu290 contributes to the L-serine binding site. Position 354–357 (354–357 (EISS)) interacts with ATP. Ser390 lines the L-serine pocket.

Belongs to the class-II aminoacyl-tRNA synthetase family. Type-1 seryl-tRNA synthetase subfamily. In terms of assembly, homodimer. The tRNA molecule binds across the dimer.

The protein localises to the cytoplasm. The enzyme catalyses tRNA(Ser) + L-serine + ATP = L-seryl-tRNA(Ser) + AMP + diphosphate + H(+). It catalyses the reaction tRNA(Sec) + L-serine + ATP = L-seryl-tRNA(Sec) + AMP + diphosphate + H(+). Its pathway is aminoacyl-tRNA biosynthesis; selenocysteinyl-tRNA(Sec) biosynthesis; L-seryl-tRNA(Sec) from L-serine and tRNA(Sec): step 1/1. Catalyzes the attachment of serine to tRNA(Ser). Is also able to aminoacylate tRNA(Sec) with serine, to form the misacylated tRNA L-seryl-tRNA(Sec), which will be further converted into selenocysteinyl-tRNA(Sec). The chain is Serine--tRNA ligase from Photorhabdus laumondii subsp. laumondii (strain DSM 15139 / CIP 105565 / TT01) (Photorhabdus luminescens subsp. laumondii).